The following is a 628-amino-acid chain: CMP-5'-(3-aminopropyl)phosphonate synthase (628 aa).

The mobA-like NTP transferase stretch occupies residues 1 to 255 (MNENRTFATP…DPGDQRQADF (255 aa)). The decarboxylase stretch occupies residues 278 to 628 (GVTDHALLYN…TTEGAGRADG (351 aa)). Lysine 466 is modified (N6-(pyridoxal phosphate)lysine).

It in the N-terminal section; belongs to the MobA family. The protein in the C-terminal section; belongs to the class-I pyridoxal-phosphate-dependent aminotransferase family. Mg(2+) serves as cofactor. The cofactor is pyridoxal 5'-phosphate.

The enzyme catalyses 2-amino-4-phosphonobutanoate + CTP = CMP-5'-(3-amino-3-carboxypropyl)phosphonate + diphosphate. The catalysed reaction is CMP-5'-(3-amino-3-carboxypropyl)phosphonate + H(+) = CMP-5'-(3-aminopropyl)phosphonate + CO2. It functions in the pathway antibiotic biosynthesis. In terms of biological role, bifunctional cytidylyltransferase/decarboxylase involved in the biosynthesis of the phosphonate antibiotic FR-900098, a potent antimalarial agent that acts as an inhibitor of 1-deoxy-D-xylulose 5-phosphate reductoisomerase (DXR), the first enzyme in the nonmevalonate pathway for isoprenoid biosynthesis. Catalyzes the condensation of 2-amino-4-phosphonobutyrate (2APn) and CTP to form CMP-5'-2APn and then decarboxylates CMP-5'-2APn to yield CMP-5'-(3-aminopropyl)phosphonate (CMP-5'-3APn). In Streptomyces rubellomurinus (strain ATCC 31215), this protein is CMP-5'-(3-aminopropyl)phosphonate synthase.